Consider the following 130-residue polypeptide: Small ribosomal subunit protein uS9 (130 aa).

Belongs to the universal ribosomal protein uS9 family.

In Aeromonas hydrophila subsp. hydrophila (strain ATCC 7966 / DSM 30187 / BCRC 13018 / CCUG 14551 / JCM 1027 / KCTC 2358 / NCIMB 9240 / NCTC 8049), this protein is Small ribosomal subunit protein uS9.